Here is a 132-residue protein sequence, read N- to C-terminus: MGKKDIRRKEQREKKRIARERVETLFTLAERVFPYSPELANRYVEIALSVQQKAKIRMPRKWKRRYCKKCHSFLVPGVNARVRLRDKPYPHVVITCLNCGNIMRYPYLREKKARRKYASKSTENGNGPDWTS.

4 residues coordinate Zn(2+): Cys-67, Cys-70, Cys-96, and Cys-99.

This sequence belongs to the eukaryotic/archaeal RNase P protein component 4 family. Consists of a catalytic RNA component and at least 4-5 protein subunits. Zn(2+) is required as a cofactor.

It is found in the cytoplasm. It carries out the reaction Endonucleolytic cleavage of RNA, removing 5'-extranucleotides from tRNA precursor.. Its function is as follows. Part of ribonuclease P, a protein complex that generates mature tRNA molecules by cleaving their 5'-ends. In Thermococcus kodakarensis (strain ATCC BAA-918 / JCM 12380 / KOD1) (Pyrococcus kodakaraensis (strain KOD1)), this protein is Ribonuclease P protein component 4.